The chain runs to 369 residues: Probable dual-specificity RNA methyltransferase RlmN (369 aa).

E106 serves as the catalytic Proton acceptor. A Radical SAM core domain is found at 118–354 (EARRLTVCVS…VTVRRSRGQD (237 aa)). C125 and C359 are disulfide-bonded. [4Fe-4S] cluster-binding residues include C132, C136, and C139. S-adenosyl-L-methionine contacts are provided by residues 183–184 (GE), S215, 238–240 (SLH), and N316. C359 serves as the catalytic S-methylcysteine intermediate.

Belongs to the radical SAM superfamily. RlmN family. [4Fe-4S] cluster serves as cofactor.

Its subcellular location is the cytoplasm. It carries out the reaction adenosine(2503) in 23S rRNA + 2 reduced [2Fe-2S]-[ferredoxin] + 2 S-adenosyl-L-methionine = 2-methyladenosine(2503) in 23S rRNA + 5'-deoxyadenosine + L-methionine + 2 oxidized [2Fe-2S]-[ferredoxin] + S-adenosyl-L-homocysteine. The enzyme catalyses adenosine(37) in tRNA + 2 reduced [2Fe-2S]-[ferredoxin] + 2 S-adenosyl-L-methionine = 2-methyladenosine(37) in tRNA + 5'-deoxyadenosine + L-methionine + 2 oxidized [2Fe-2S]-[ferredoxin] + S-adenosyl-L-homocysteine. Specifically methylates position 2 of adenine 2503 in 23S rRNA and position 2 of adenine 37 in tRNAs. The protein is Probable dual-specificity RNA methyltransferase RlmN of Salinibacter ruber (strain DSM 13855 / M31).